The primary structure comprises 146 residues: MLSQEFFNSFITIYRPYLKLAEPILEKHNIYYGQWLILRDIAKHQPTTLIEISHRRAIEKPTARKTLKALIENDLITVENSLEDKRQKFLTLTPKGHELYEIVCLDVQKLQQAVVAKTNISQDQMQETINVMNQIHKILLKETHND.

The HTH marR-type domain maps to 1 to 137 (MLSQEFFNSF…TINVMNQIHK (137 aa)).

This is an uncharacterized protein from Staphylococcus aureus (strain MW2).